The following is a 1273-amino-acid chain: Protein sax-3 (1273 aa).

A signal peptide spans 1–23 (MFNRKTLLCTILLVLQAVIRSFC). Ig-like C2-type domains follow at residues 31-127 (PVII…GSLK), 133-222 (EDFR…ARLS), 227-312 (PKFE…AHLR), 317-411 (PSFQ…LKVT), and 425-511 (PTIE…ASLT). Cystine bridges form between cysteine 52-cysteine 110, cysteine 154-cysteine 205, cysteine 248-cysteine 296, cysteine 338-cysteine 393, and cysteine 446-cysteine 495. Fibronectin type-III domains lie at 533 to 628 (SPTQ…TSKP), 653 to 750 (QLIK…TAEA), and 755 to 849 (PPED…MNQD). The chain crosses the membrane as a helical span at residues 874–894 (VPVIVIVAILIIFVVIIIAYC). Residues 1033 to 1273 (APAMPTNPVP…NNGIVTQEQT (241 aa)) are disordered. Positions 1037–1046 (PTNPVPPEPP) are enriched in pro residues. Residues 1096 to 1105 (QLHSSDGTGS) show a composition bias toward polar residues. Residues 1106–1115 (SKERTGERRT) show a composition bias toward basic and acidic residues. Pro residues predominate over residues 1125 to 1136 (IPPPPSNPPPPG). Residues 1145-1156 (QTATRRQLNRGS) are compositionally biased toward polar residues. Positions 1207–1222 (MDDDGGSSEADGENSE) are enriched in acidic residues. Residues 1240 to 1273 (SASTLAHSCYGTNGTAQRFRSIPRNNGIVTQEQT) show a composition bias toward polar residues.

It belongs to the immunoglobulin superfamily. ROBO/SAX3 family. As to expression, expressed in the AVG interneuron and the male-specific sensory neuron HOA.

It localises to the membrane. Its function is as follows. Required to confine migrating sex myoblasts to the ventral muscle quadrants during their migration through the body and for multiple aspects of sensory, motor, and interneuron axon guidance. The chain is Protein sax-3 from Caenorhabditis elegans.